Consider the following 621-residue polypeptide: Putative DNA 3'-5' helicase Rad25 (621 aa).

Residues 268–417 form the Helicase ATP-binding domain; that stretch reads VERFTEQGSG…EIFTLIGPPI (150 aa). 281-288 is a binding site for ATP; sequence GPPGSGKT. The DEAH box motif lies at 371 to 374; it reads DEVH. Residues 441 to 465 form a disordered region; sequence PWGDETEQSEYSSTSGHDRRQAAAS. The 153-residue stretch at 469 to 621 folds into the Helicase C-terminal domain; sequence KIDEIRYALA…EAVEPPAKTE (153 aa).

Belongs to the helicase family. RAD25/XPB subfamily.

It catalyses the reaction Couples ATP hydrolysis with the unwinding of duplex DNA by translocating in the 3'-5' direction.. The enzyme catalyses ATP + H2O = ADP + phosphate + H(+). The protein is Putative DNA 3'-5' helicase Rad25 of Haloarcula marismortui (strain ATCC 43049 / DSM 3752 / JCM 8966 / VKM B-1809) (Halobacterium marismortui).